Reading from the N-terminus, the 858-residue chain is DNA mismatch repair protein MutS (858 aa).

Gly-637–Ser-644 contributes to the ATP binding site.

This sequence belongs to the DNA mismatch repair MutS family.

Functionally, this protein is involved in the repair of mismatches in DNA. It is possible that it carries out the mismatch recognition step. This protein has a weak ATPase activity. The sequence is that of DNA mismatch repair protein MutS from Protochlamydia amoebophila (strain UWE25).